The following is a 444-amino-acid chain: Homogentisate 1,2-dioxygenase (444 aa).

The active-site Proton acceptor is the H298. The Fe cation site is built by H341 and E347. Residues Y356 and H377 each coordinate homogentisate. H377 serves as a coordination point for Fe cation.

It belongs to the homogentisate dioxygenase family. Hexamer; dimer of trimers. It depends on Fe cation as a cofactor.

The enzyme catalyses homogentisate + O2 = 4-maleylacetoacetate + H(+). Its pathway is amino-acid degradation; L-phenylalanine degradation; acetoacetate and fumarate from L-phenylalanine: step 4/6. Involved in the catabolism of homogentisate (2,5-dihydroxyphenylacetate or 2,5-OH-PhAc), a central intermediate in the degradation of phenylalanine and tyrosine. Catalyzes the oxidative ring cleavage of the aromatic ring of homogentisate to yield maleylacetoacetate. In Burkholderia orbicola (strain MC0-3), this protein is Homogentisate 1,2-dioxygenase.